A 197-amino-acid polypeptide reads, in one-letter code: Transcription factor FapR (197 aa).

Belongs to the FapR family.

In terms of biological role, transcriptional factor involved in regulation of membrane lipid biosynthesis by repressing genes involved in fatty acid and phospholipid metabolism. This Bacillus anthracis (strain A0248) protein is Transcription factor FapR.